A 139-amino-acid chain; its full sequence is 3-hydroxyacyl-[acyl-carrier-protein] dehydratase FabZ (139 aa).

Residue His46 is part of the active site.

It belongs to the thioester dehydratase family. FabZ subfamily.

The protein localises to the cytoplasm. The enzyme catalyses a (3R)-hydroxyacyl-[ACP] = a (2E)-enoyl-[ACP] + H2O. In terms of biological role, involved in unsaturated fatty acids biosynthesis. Catalyzes the dehydration of short chain beta-hydroxyacyl-ACPs and long chain saturated and unsaturated beta-hydroxyacyl-ACPs. This Streptococcus pyogenes serotype M1 protein is 3-hydroxyacyl-[acyl-carrier-protein] dehydratase FabZ.